Here is a 151-residue protein sequence, read N- to C-terminus: MHSLQAKILDPRLGSDYPLPAYATAGSAGLDLRAMLQEELTLEPGQTALIPTGLAIHIADPGLAALVLPRSGLGHKHGIVLGNLVGLIDSDYQGELMISCWNRGQSTFRIAVGERIAQLVLVPVMQAHFQLVESFDESQRGAGGFGHSGSH.

Substrate is bound by residues 70 to 72 (RSG), Asn-83, 87 to 89 (LID), and Met-97.

Belongs to the dUTPase family. It depends on Mg(2+) as a cofactor.

The catalysed reaction is dUTP + H2O = dUMP + diphosphate + H(+). It participates in pyrimidine metabolism; dUMP biosynthesis; dUMP from dCTP (dUTP route): step 2/2. This enzyme is involved in nucleotide metabolism: it produces dUMP, the immediate precursor of thymidine nucleotides and it decreases the intracellular concentration of dUTP so that uracil cannot be incorporated into DNA. In Azotobacter vinelandii (strain DJ / ATCC BAA-1303), this protein is Deoxyuridine 5'-triphosphate nucleotidohydrolase.